Consider the following 378-residue polypeptide: UPF0754 membrane protein BCE33L0760 (378 aa).

The next 2 membrane-spanning stretches (helical) occupy residues 1 to 21 (MNIW…GGFT) and 357 to 377 (YLGA…LLFL).

The protein belongs to the UPF0754 family.

Its subcellular location is the cell membrane. In Bacillus cereus (strain ZK / E33L), this protein is UPF0754 membrane protein BCE33L0760.